The primary structure comprises 498 residues: MTTKKLYFLSISIIILVAISIAIYITLNSNTKTRLTNDSQQQIDKIIEHDLQKGHIPGASILIVKNGKVFLNKGYGYQDVDKKVKASPTTKYEIASNTKAFTGLAILKLAQEGRLNLNDDVSKHVPHFKMNYNGQNETITIKQLLAQTSGIPSDITSEDAVTNKNNRLNDVTRAIMGDELHHKPGEEFEYSNMNYDLLGLIIQNVTKQSYTKYITNSWLKPLHMTHTSFKQTNNKSKHDAIGYELQGSTPVVSKPEFNLWDTPSAYMMTSTEDLEHWIKFQLNPPDKYKSLVQQSHKNLSSTIGEPNANAYASGWFTNNDEHLVFHSGTLDNFSSFILLNPKQNYGIVVLANLNSEYVPKLVEHLNTQIVNHKRYSTVASILNQYKDQFNIVTVLMTTLILLAFIFSAYRAWQMRHGQILLRRSKRIAVLSWLTLCLCIAIALILYALPYLILGSNNWSFVLTWLPIEIKLALITTLIALFSTLIVILLFLHTKITKT.

4 helical membrane-spanning segments follow: residues 6 to 26 (LYFLSISIIILVAISIAIYIT), 389 to 409 (FNIVTVLMTTLILLAFIFSAY), 433 to 453 (LTLCLCIAIALILYALPYLIL), and 471 to 491 (LALITTLIALFSTLIVILLFL).

Its subcellular location is the cell membrane. Its precise function is unknown. Has no penicillin-binding activity and is not involved in methicillin resistance. This is Protein flp (flp) from Staphylococcus aureus (strain Mu50 / ATCC 700699).